Consider the following 518-residue polypeptide: Arginyl-tRNA--protein transferase 1 (518 aa).

Positions 149-165 are enriched in basic and acidic residues; sequence ESLQSEGKNSKKEEPHE. Residues 149–207 form a disordered region; sequence ESLQSEGKNSKKEEPHELLQSQDSVGEKLGSGEPSHSVKVHTVPKPGKGADLSKPPCRK. Phosphoserine is present on serine 169.

This sequence belongs to the R-transferase family. As to quaternary structure, monomer. Interacts with LIAT1; LIAT1 is not a substrate of ATE1, the interaction takes place in the cytoplasm and seems to increase ATE1 arginyltransferase activity.

The protein localises to the nucleus. It is found in the cytoplasm. The catalysed reaction is an N-terminal L-alpha-aminoacyl-[protein] + L-arginyl-tRNA(Arg) = an N-terminal L-arginyl-L-aminoacyl-[protein] + tRNA(Arg) + H(+). Its function is as follows. Involved in the post-translational conjugation of arginine to the N-terminal aspartate or glutamate of a protein. This arginylation is required for degradation of the protein via the ubiquitin pathway. Does not arginylate cysteine residues. In Macaca fascicularis (Crab-eating macaque), this protein is Arginyl-tRNA--protein transferase 1 (ATE1).